Consider the following 175-residue polypeptide: Ribosome maturation factor RimM (175 aa).

One can recognise a PRC barrel domain in the interval 99–172 (SIEFTWEHFI…KLTMIIPDGL (74 aa)).

The protein belongs to the RimM family. In terms of assembly, binds ribosomal protein uS19.

It localises to the cytoplasm. An accessory protein needed during the final step in the assembly of 30S ribosomal subunit, possibly for assembly of the head region. Essential for efficient processing of 16S rRNA. May be needed both before and after RbfA during the maturation of 16S rRNA. It has affinity for free ribosomal 30S subunits but not for 70S ribosomes. The chain is Ribosome maturation factor RimM from Porphyromonas gingivalis (strain ATCC BAA-308 / W83).